Here is a 130-residue protein sequence, read N- to C-terminus: Small ribosomal subunit protein uS11 (130 aa).

Belongs to the universal ribosomal protein uS11 family. As to quaternary structure, part of the 30S ribosomal subunit. Interacts with proteins S7 and S18. Binds to IF-3.

Functionally, located on the platform of the 30S subunit, it bridges several disparate RNA helices of the 16S rRNA. Forms part of the Shine-Dalgarno cleft in the 70S ribosome. The chain is Small ribosomal subunit protein uS11 from Prochlorococcus marinus (strain NATL1A).